Reading from the N-terminus, the 629-residue chain is Pentatricopeptide repeat-containing protein At1g62930, chloroplastic (629 aa).

The transit peptide at 1-41 (MTSCVHLGIVASQSKKMSLAKRFAQLRKASPLFSLRGVYFS) directs the protein to the chloroplast. PPR repeat units lie at residues 79 to 113 (SIVE…RISY), 114 to 148 (DLYS…GYEP), 149 to 183 (DIVT…EYQP), 184 to 218 (NTVT…GCQP), 219 to 253 (DLFT…KIEA), 254 to 288 (DVVI…GIRP), 289 to 323 (NVVT…KINP), 324 to 358 (NVVT…SIDP), 359 to 393 (DIFT…DCFP), 394 to 428 (NVVT…GLVG), 429 to 463 (NTVT…GVPP), 464 to 498 (DIIT…KMEP), 499 to 533 (DIYT…GVKP), 534 to 568 (NVII…GTLP), and 569 to 603 (NSGT…GFVG).

Belongs to the PPR family. P subfamily.

The protein resides in the plastid. The protein localises to the chloroplast. This chain is Pentatricopeptide repeat-containing protein At1g62930, chloroplastic, found in Arabidopsis thaliana (Mouse-ear cress).